The primary structure comprises 334 residues: Fructose-1,6-bisphosphatase class 1 (334 aa).

The Mg(2+) site is built by Glu89, Asp112, Leu114, and Asp115. Substrate-binding positions include 115–118, Asn208, Tyr241, and Lys271; that span reads DGSS. Glu277 provides a ligand contact to Mg(2+).

The protein belongs to the FBPase class 1 family. As to quaternary structure, homotetramer. Mg(2+) serves as cofactor.

Its subcellular location is the cytoplasm. The enzyme catalyses beta-D-fructose 1,6-bisphosphate + H2O = beta-D-fructose 6-phosphate + phosphate. It functions in the pathway carbohydrate biosynthesis; gluconeogenesis. This Serratia proteamaculans (strain 568) protein is Fructose-1,6-bisphosphatase class 1.